Consider the following 474-residue polypeptide: 4-O-methyl-glucuronoyl methylesterase (474 aa).

A signal peptide spans 1–17 (MFKPSFVALALVSYATA). The 37-residue stretch at 19 to 55 (ASAPQWGQCGGIGWTGPTACPSGWACQQLNAYYSQCL) folds into the CBM1 domain. The disordered stretch occupies residues 61-91 (APARTTAAPPPPPATTAAPPPPTTSAPTGSS). Positions 68–84 (APPPPPATTAAPPPPTT) are enriched in pro residues. Residue Asn-120 is glycosylated (N-linked (GlcNAc...) asparagine). Positions 284–289 (GCSRDG) match the GXSYXG catalytic site motif motif. 2 cysteine pairs are disulfide-bonded: Cys-285–Cys-421 and Cys-317–Cys-393. Ser-286 (nucleophile) is an active-site residue. The substrate site is built by Lys-290, Gln-332, Glu-340, and Trp-384. His-420 serves as the catalytic Proton donor/acceptor.

This sequence belongs to the carbohydrate esterase 15 (CE15) family. N-glycosylated.

The protein localises to the secreted. The catalysed reaction is a 4-O-methyl-alpha-D-glucuronosyl ester derivative + H2O = 4-O-methyl-alpha-D-glucuronate derivative + an alcohol + H(+). In terms of biological role, glucuronoyl esterase which may play a significant role in biomass degradation, as it is considered to disconnect hemicellulose from lignin through the hydrolysis of the ester bond between 4-O-methyl-D-glucuronic acid residues of glucuronoxylans and aromatic alcohols of lignin. The polypeptide is 4-O-methyl-glucuronoyl methylesterase (Cerrena unicolor (Canker rot fungus)).